Consider the following 180-residue polypeptide: UPF0227 protein YcfP (180 aa).

The protein belongs to the UPF0227 family.

This is UPF0227 protein YcfP from Salmonella arizonae (strain ATCC BAA-731 / CDC346-86 / RSK2980).